The following is a 544-amino-acid chain: Methionine--tRNA ligase 1 (544 aa).

The 'HIGH' region signature appears at 10-20; sequence PYANGSLHLGH. Cysteine 141, cysteine 144, cysteine 153, and cysteine 156 together coordinate Zn(2+). Positions 329–333 match the 'KMSKS' region motif; the sequence is KLSTS. Threonine 332 is an ATP binding site.

This sequence belongs to the class-I aminoacyl-tRNA synthetase family. MetG type 1 subfamily. As to quaternary structure, monomer. Zn(2+) is required as a cofactor.

The protein resides in the cytoplasm. The catalysed reaction is tRNA(Met) + L-methionine + ATP = L-methionyl-tRNA(Met) + AMP + diphosphate. Is required not only for elongation of protein synthesis but also for the initiation of all mRNA translation through initiator tRNA(fMet) aminoacylation. The polypeptide is Methionine--tRNA ligase 1 (Bacillus cereus (strain ATCC 10987 / NRS 248)).